The chain runs to 360 residues: DNA replication and repair protein RecF (360 aa).

30–37 (GQNGSGKT) contacts ATP.

This sequence belongs to the RecF family.

Its subcellular location is the cytoplasm. Its function is as follows. The RecF protein is involved in DNA metabolism; it is required for DNA replication and normal SOS inducibility. RecF binds preferentially to single-stranded, linear DNA. It also seems to bind ATP. This Shewanella putrefaciens (strain CN-32 / ATCC BAA-453) protein is DNA replication and repair protein RecF.